The following is a 1284-amino-acid chain: Peroxisomal ATPase PEX1 (1284 aa).

Positions 339–373 (SPKQQQDKSKQGVLLPDKEKQLSKSPDHKQISSNR) are disordered. Residues 343–373 (QQDKSKQGVLLPDKEKQLSKSPDHKQISSNR) show a composition bias toward basic and acidic residues. ATP is bound by residues 600–607 (GGKGSGKS) and 882–889 (GPPGTGKT). S1182, S1210, and S1212 each carry phosphoserine. The interval 1261–1284 (FQNPKKRKNQSGTVFRTGQKVTLA) is disordered. Polar residues predominate over residues 1270–1284 (QSGTVFRTGQKVTLA).

It belongs to the AAA ATPase family. As to quaternary structure, homooligomer; homooligomerizes in the cytosol, interaction with PEX6 promotes dissociation of the homooligomer. Interacts with PEX6; forming the PEX1-PEX6 AAA ATPase complex, which is composed of a heterohexamer formed by a trimer of PEX1-PEX6 dimers. Interacts indirectly with PEX26, via its interaction with PEX6.

It localises to the cytoplasm. The protein resides in the cytosol. It is found in the peroxisome membrane. The enzyme catalyses ATP + H2O = ADP + phosphate + H(+). Functionally, component of the PEX1-PEX6 AAA ATPase complex, a protein dislocase complex that mediates the ATP-dependent extraction of the PEX5 receptor from peroxisomal membranes, an essential step for PEX5 recycling. Specifically recognizes PEX5 monoubiquitinated at 'Cys-11', and pulls it out of the peroxisome lumen through the PEX2-PEX10-PEX12 retrotranslocation channel. Extraction by the PEX1-PEX6 AAA ATPase complex is accompanied by unfolding of the TPR repeats and release of bound cargo from PEX5. The protein is Peroxisomal ATPase PEX1 of Mus musculus (Mouse).